Here is a 360-residue protein sequence, read N- to C-terminus: UDP-N-acetylglucosamine--N-acetylmuramyl-(pentapeptide) pyrophosphoryl-undecaprenol N-acetylglucosamine transferase (360 aa).

Residues 16–18 (TGG), N128, R165, S191, I247, 266–271 (ALTVSE), and Q292 contribute to the UDP-N-acetyl-alpha-D-glucosamine site.

It belongs to the glycosyltransferase 28 family. MurG subfamily.

It localises to the cell inner membrane. The enzyme catalyses di-trans,octa-cis-undecaprenyl diphospho-N-acetyl-alpha-D-muramoyl-L-alanyl-D-glutamyl-meso-2,6-diaminopimeloyl-D-alanyl-D-alanine + UDP-N-acetyl-alpha-D-glucosamine = di-trans,octa-cis-undecaprenyl diphospho-[N-acetyl-alpha-D-glucosaminyl-(1-&gt;4)]-N-acetyl-alpha-D-muramoyl-L-alanyl-D-glutamyl-meso-2,6-diaminopimeloyl-D-alanyl-D-alanine + UDP + H(+). The protein operates within cell wall biogenesis; peptidoglycan biosynthesis. In terms of biological role, cell wall formation. Catalyzes the transfer of a GlcNAc subunit on undecaprenyl-pyrophosphoryl-MurNAc-pentapeptide (lipid intermediate I) to form undecaprenyl-pyrophosphoryl-MurNAc-(pentapeptide)GlcNAc (lipid intermediate II). This Shewanella amazonensis (strain ATCC BAA-1098 / SB2B) protein is UDP-N-acetylglucosamine--N-acetylmuramyl-(pentapeptide) pyrophosphoryl-undecaprenol N-acetylglucosamine transferase.